Reading from the N-terminus, the 619-residue chain is ATP-dependent zinc metalloprotease FtsH (619 aa).

The Cytoplasmic segment spans residues 1–11; sequence MDKQSKFRIKT. Residues 12 to 32 form a helical membrane-spanning segment; the sequence is FFKKIIFFLIIFCFFYFFNFI. At 33 to 131 the chain is on the periplasmic side; it reads KKTKKITHTT…FKNYKIYTVL (99 aa). Residues 132–152 traverse the membrane as a helical segment; it reads NFFYDYGFFLMIIIICWIFIF. The Cytoplasmic portion of the chain corresponds to 153–619; it reads RKIASRSSES…FKEDFASILD (467 aa). Position 224 to 231 (224 to 231) interacts with ATP; sequence GPPGTGKT. His-447 is a Zn(2+) binding site. The active site involves Glu-448. His-451 and Asp-522 together coordinate Zn(2+).

In the central section; belongs to the AAA ATPase family. The protein in the C-terminal section; belongs to the peptidase M41 family. In terms of assembly, homohexamer. Requires Zn(2+) as cofactor.

Its subcellular location is the cell inner membrane. Functionally, acts as a processive, ATP-dependent zinc metallopeptidase for both cytoplasmic and membrane proteins. Plays a role in the quality control of integral membrane proteins. In Karelsulcia muelleri (strain DMIN) (Sulcia muelleri), this protein is ATP-dependent zinc metalloprotease FtsH.